We begin with the raw amino-acid sequence, 196 residues long: Ribosome maturation factor RimP (196 aa).

The disordered stretch occupies residues 164–196 (LAPQKPNKPGPKKTGHEKKKPSNESAAGKPRAE). The segment covering 173–182 (GPKKTGHEKK) has biased composition (basic residues).

It belongs to the RimP family.

It is found in the cytoplasm. In terms of biological role, required for maturation of 30S ribosomal subunits. The protein is Ribosome maturation factor RimP of Xanthomonas oryzae pv. oryzae (strain MAFF 311018).